The primary structure comprises 119 residues: Large ribosomal subunit protein bL20 (119 aa).

The protein belongs to the bacterial ribosomal protein bL20 family.

Binds directly to 23S ribosomal RNA and is necessary for the in vitro assembly process of the 50S ribosomal subunit. It is not involved in the protein synthesizing functions of that subunit. This chain is Large ribosomal subunit protein bL20, found in Treponema denticola (strain ATCC 35405 / DSM 14222 / CIP 103919 / JCM 8153 / KCTC 15104).